We begin with the raw amino-acid sequence, 254 residues long: Proteasome subunit alpha (254 aa).

The disordered stretch occupies residues 234–254 (EEMLPTPAATEDAPANGDAPS).

It belongs to the peptidase T1A family. The 20S proteasome core is composed of 14 alpha and 14 beta subunits that assemble into four stacked heptameric rings, resulting in a barrel-shaped structure. The two inner rings, each composed of seven catalytic beta subunits, are sandwiched by two outer rings, each composed of seven alpha subunits. The catalytic chamber with the active sites is on the inside of the barrel. Has a gated structure, the ends of the cylinder being occluded by the N-termini of the alpha-subunits. Is capped by the proteasome-associated ATPase, ARC.

The protein localises to the cytoplasm. The protein operates within protein degradation; proteasomal Pup-dependent pathway. With respect to regulation, the formation of the proteasomal ATPase ARC-20S proteasome complex, likely via the docking of the C-termini of ARC into the intersubunit pockets in the alpha-rings, may trigger opening of the gate for substrate entry. Interconversion between the open-gate and close-gate conformations leads to a dynamic regulation of the 20S proteasome proteolysis activity. Component of the proteasome core, a large protease complex with broad specificity involved in protein degradation. In Rhodococcus erythropolis (strain PR4 / NBRC 100887), this protein is Proteasome subunit alpha.